Reading from the N-terminus, the 716-residue chain is Astellifadiene synthase (716 aa).

Positions 1-323 (MEFKYSTLID…SPRYYTDAKF (323 aa)) are terpene cyclase. A Mg(2+)-binding site is contributed by aspartate 92. Residues aspartate 92, 179-182 (RIYD), asparagine 223, 227-231 (SWEKE), and 316-317 (RY) each bind substrate. The DDXXD 1 motif lies at 92 to 96 (DDVID). Positions 223-231 (NDLVSWEKE) match the NSE/DTE motif. The tract at residues 324–713 (SQRQLDWIKN…FQLKLILQFL (390 aa)) is prenyltransferase. Lysine 436, arginine 439, and histidine 468 together coordinate isopentenyl diphosphate. The Mg(2+) site is built by aspartate 475 and aspartate 479. Residues 475–479 (DDVED) carry the DDXXD 2 motif. Arginine 484 is a binding site for dimethylallyl diphosphate. Arginine 485 is an isopentenyl diphosphate binding site. Residues lysine 562, threonine 563, glutamine 598, asparagine 605, lysine 615, and lysine 625 each coordinate dimethylallyl diphosphate.

The protein in the N-terminal section; belongs to the terpene synthase family. It in the C-terminal section; belongs to the FPP/GGPP synthase family. Hexamer. Mg(2+) is required as a cofactor.

The enzyme catalyses isopentenyl diphosphate + (2E,6E)-farnesyl diphosphate = (2E,6E,10E)-geranylgeranyl diphosphate + diphosphate. The catalysed reaction is isopentenyl diphosphate + (2E,6E,10E)-geranylgeranyl diphosphate = (2E,6E,10E,14E)-geranylfarnesyl diphosphate + diphosphate. It carries out the reaction (2E,6E,10E,14E)-geranylfarnesyl diphosphate = astellifadiene + diphosphate. It participates in secondary metabolite biosynthesis; terpenoid biosynthesis. In terms of biological role, bifunctional terpene synthase that converts dimethylallyl diphosphate (DMAPP) and isopentenyl diphosphate (IPP) into astellifadiene. The C-terminal prenyltransferase (PT) domain of EvAS catalyzes formation of geranylfarnesyl pyrophosphate (GFPP), whereas the N-terminal terpene cyclase (TC) domain catalyzes the cyclization of GFPP to astellifadiene. This Emericella variicolor (Aspergillus stellatus) protein is Astellifadiene synthase.